A 179-amino-acid polypeptide reads, in one-letter code: Apoptosis regulator Bcl-2 homolog (179 aa).

The short motif at 76–95 (ELFKDLINWGRICGFIVFSA) is the BH1 element. The BH2 motif lies at 126-141 (PWMISHGGQEEFLAFS).

It belongs to the Bcl-2 family. Interacts with host BECN1 (via BH3 homology domain); this interaction allows the virus to inhibit BECN1, and thus autophagy. Interacts with host BID. Interacts with host BAX.

Its subcellular location is the host mitochondrion. It is found in the host endoplasmic reticulum. In terms of biological role, suppresses apoptosis in host cell to promote the viral replication. Has the ability to potentially bind to all the members of the proapoptotic Bcl-2 family. Inhibits autophagy by interacting with host Beclin 1 (BECN1). This chain is Apoptosis regulator Bcl-2 homolog, found in African swine fever virus (isolate Tick/South Africa/Pretoriuskop Pr4/1996) (ASFV).